Consider the following 2039-residue polypeptide: Calcium-channel protein CCH1 (2039 aa).

Disordered regions lie at residues 1-171 (MQGR…PPRS) and 206-288 (PQLK…PQKE). Over residues 64-80 (STEEKKGDEYNGNDKDS) the composition is skewed to basic and acidic residues. A glycan (N-linked (GlcNAc...) asparagine) is linked at Asn98. 2 stretches are compositionally biased toward low complexity: residues 122 to 132 (SPSTKSAKSSS) and 147 to 164 (FSSY…SPSS). Residues 209–226 (KSEKSRPVSDVGEDRGEG) are compositionally biased toward basic and acidic residues. Residues Asn257 and Asn269 are each glycosylated (N-linked (GlcNAc...) asparagine). A compositionally biased stretch (basic residues) spans 271 to 281 (SRKKPSPKFFH). Ser284 carries the phosphoserine modification. Residues 346 to 366 (YSLLYNTLLTFYAILLAIRTY) traverse the membrane as a helical segment. The N-linked (GlcNAc...) asparagine glycan is linked to Asn379. Residues 384–404 (FIFILSACFTGNDIAKIIAFG) traverse the membrane as a helical segment. Asn559 carries an N-linked (GlcNAc...) asparagine glycan. A run of 3 helical transmembrane segments spans residues 563-583 (MLVY…QGSF), 658-678 (IVNS…TDLM), and 691-711 (LFFI…LIAV). 2 N-linked (GlcNAc...) asparagine glycosylation sites follow: Asn754 and Asn760. A run of 3 helical transmembrane segments spans residues 766-786 (LAIY…DIGM), 809-829 (ISIV…PNMW), and 841-861 (FIIS…VLGH). N-linked (GlcNAc...) asparagine glycans are attached at residues Asn882 and Asn900. 2 helical membrane passes run 904–924 (FYFF…EGVI) and 942–962 (SFLS…LYAL). Asn968 carries an N-linked (GlcNAc...) asparagine glycan. The chain crosses the membrane as a helical span at residues 978-998 (FFIIWFLLSNSVILNIFIALI). N-linked (GlcNAc...) asparagine glycosylation is present at Asn1153. Residues 1207-1227 (VFVFIFALATILLIVCSCYVT) form a helical membrane-spanning segment. Asn1240 carries an N-linked (GlcNAc...) asparagine glycan. 2 consecutive transmembrane segments (helical) span residues 1247–1267 (CAFI…DGFI) and 1277–1297 (PWNF…IAYL). Asn1302 carries N-linked (GlcNAc...) asparagine glycosylation. 2 helical membrane-spanning segments follow: residues 1340-1360 (IFEA…WGLS) and 1408-1428 (FASA…VDLL). N-linked (GlcNAc...) asparagine glycosylation occurs at Asn1433. Transmembrane regions (helical) follow at residues 1452–1472 (FLVL…VSFI), 1529–1549 (NFYY…MLLS), 1554–1574 (PGNL…VFLI), 1596–1616 (IRLS…HVPA), and 1618–1638 (HYWF…FIIP). N-linked (GlcNAc...) asparagine glycosylation occurs at Asn1640. The chain crosses the membrane as a helical span at residues 1654-1674 (LPPILSLTYTWGVLFLVYAIA). Asn1687 and Asn1732 each carry an N-linked (GlcNAc...) asparagine glycan. The chain crosses the membrane as a helical span at residues 1748–1768 (LMSWNIISMYIFVNMFVSLII). Residues Asn1770 and Asn1785 are each glycosylated (N-linked (GlcNAc...) asparagine). One can recognise an EF-hand domain in the interval 1787-1822 (SEIKKYIEAWSKFDTDGTGELELSYLPRIMHSFDGP). The segment at 2011–2039 (PRMNQDSTMEPPEEPIDNNDDSANDLIDR) is disordered. Residues 2021 to 2033 (PPEEPIDNNDDSA) show a composition bias toward acidic residues.

It belongs to the calcium channel alpha-1 subunit (TC 1.A.1.11) family. Interacts with MID1 to form a Ca(2+) influx channel.

The protein localises to the cell membrane. Voltage-gated, high-affinity calcium channel that functions together with MID1 to mediate calcium entry into cells. Required during conditions of environmental stress. The chain is Calcium-channel protein CCH1 (CCH1) from Saccharomyces cerevisiae (strain ATCC 204508 / S288c) (Baker's yeast).